The following is a 100-amino-acid chain: Aspartyl/glutamyl-tRNA(Asn/Gln) amidotransferase subunit C (100 aa).

It belongs to the GatC family. Heterotrimer of A, B and C subunits.

The catalysed reaction is L-glutamyl-tRNA(Gln) + L-glutamine + ATP + H2O = L-glutaminyl-tRNA(Gln) + L-glutamate + ADP + phosphate + H(+). It carries out the reaction L-aspartyl-tRNA(Asn) + L-glutamine + ATP + H2O = L-asparaginyl-tRNA(Asn) + L-glutamate + ADP + phosphate + 2 H(+). Allows the formation of correctly charged Asn-tRNA(Asn) or Gln-tRNA(Gln) through the transamidation of misacylated Asp-tRNA(Asn) or Glu-tRNA(Gln) in organisms which lack either or both of asparaginyl-tRNA or glutaminyl-tRNA synthetases. The reaction takes place in the presence of glutamine and ATP through an activated phospho-Asp-tRNA(Asn) or phospho-Glu-tRNA(Gln). The sequence is that of Aspartyl/glutamyl-tRNA(Asn/Gln) amidotransferase subunit C from Streptococcus thermophilus (strain ATCC BAA-491 / LMD-9).